We begin with the raw amino-acid sequence, 477 residues long: Bifunctional protein HldE (477 aa).

Residues 1-318 (MKVTLPEFER…ENAVRGRAET (318 aa)) form a ribokinase region. Residue 195-198 (NLSE) participates in ATP binding. The active site involves aspartate 264. The segment at 344–477 (MTNGVFDILH…IKKIQKDSDK (134 aa)) is cytidylyltransferase.

The protein in the N-terminal section; belongs to the carbohydrate kinase PfkB family. This sequence in the C-terminal section; belongs to the cytidylyltransferase family. As to quaternary structure, homodimer.

The catalysed reaction is D-glycero-beta-D-manno-heptose 7-phosphate + ATP = D-glycero-beta-D-manno-heptose 1,7-bisphosphate + ADP + H(+). It catalyses the reaction D-glycero-beta-D-manno-heptose 1-phosphate + ATP + H(+) = ADP-D-glycero-beta-D-manno-heptose + diphosphate. It functions in the pathway nucleotide-sugar biosynthesis; ADP-L-glycero-beta-D-manno-heptose biosynthesis; ADP-L-glycero-beta-D-manno-heptose from D-glycero-beta-D-manno-heptose 7-phosphate: step 1/4. It participates in nucleotide-sugar biosynthesis; ADP-L-glycero-beta-D-manno-heptose biosynthesis; ADP-L-glycero-beta-D-manno-heptose from D-glycero-beta-D-manno-heptose 7-phosphate: step 3/4. Its function is as follows. Catalyzes the phosphorylation of D-glycero-D-manno-heptose 7-phosphate at the C-1 position to selectively form D-glycero-beta-D-manno-heptose-1,7-bisphosphate. In terms of biological role, catalyzes the ADP transfer from ATP to D-glycero-beta-D-manno-heptose 1-phosphate, yielding ADP-D-glycero-beta-D-manno-heptose. In Klebsiella pneumoniae subsp. pneumoniae (strain ATCC 700721 / MGH 78578), this protein is Bifunctional protein HldE.